The primary structure comprises 269 residues: Phosphatidylglycerol--prolipoprotein diacylglyceryl transferase (269 aa).

7 helical membrane-spanning segments follow: residues 10–30 (IAVS…LIGF), 56–76 (AIFY…ILFY), 91–111 (IWEG…AMFF), 126–146 (FLAP…FIGG), 172–192 (PSQL…LWFF), 200–220 (YCVS…VEFV), and 237–257 (EGQL…MAGL). Residue Arg139 participates in a 1,2-diacyl-sn-glycero-3-phospho-(1'-sn-glycerol) binding.

This sequence belongs to the Lgt family.

It is found in the cell inner membrane. It catalyses the reaction L-cysteinyl-[prolipoprotein] + a 1,2-diacyl-sn-glycero-3-phospho-(1'-sn-glycerol) = an S-1,2-diacyl-sn-glyceryl-L-cysteinyl-[prolipoprotein] + sn-glycerol 1-phosphate + H(+). It participates in protein modification; lipoprotein biosynthesis (diacylglyceryl transfer). In terms of biological role, catalyzes the transfer of the diacylglyceryl group from phosphatidylglycerol to the sulfhydryl group of the N-terminal cysteine of a prolipoprotein, the first step in the formation of mature lipoproteins. The protein is Phosphatidylglycerol--prolipoprotein diacylglyceryl transferase of Marinomonas sp. (strain MWYL1).